Consider the following 357-residue polypeptide: Geranylgeranyl pyrophosphate synthase spyE (357 aa).

The segment at 36 to 60 is disordered; the sequence is EAQSQAVPGTRTETEPTGSSPSDLQ. Residues 50 to 59 show a composition bias toward polar residues; the sequence is EPTGSSPSDL. Isopentenyl diphosphate-binding residues include K84, R87, and H116. Residues D123 and D127 each contribute to the Mg(2+) site. A dimethylallyl diphosphate-binding site is contributed by R132. R133 contributes to the isopentenyl diphosphate binding site. Residues K210, T211, and Q244 each coordinate dimethylallyl diphosphate. A Mg(2+)-binding site is contributed by D247. Residues N251, K261, and K271 each coordinate dimethylallyl diphosphate.

The protein belongs to the FPP/GGPP synthase family. Mg(2+) serves as cofactor.

The catalysed reaction is isopentenyl diphosphate + dimethylallyl diphosphate = (2E)-geranyl diphosphate + diphosphate. It catalyses the reaction isopentenyl diphosphate + (2E)-geranyl diphosphate = (2E,6E)-farnesyl diphosphate + diphosphate. It carries out the reaction isopentenyl diphosphate + (2E,6E)-farnesyl diphosphate = (2E,6E,10E)-geranylgeranyl diphosphate + diphosphate. It functions in the pathway secondary metabolite biosynthesis; terpenoid biosynthesis. In terms of biological role, geranylgeranyl pyrophosphate synthase; part of the gene cluster that mediates the biosynthesis of meroterpenoids called sartorypyrones. Within the pathway, spyE provides the spyF cosubstrate geranylgeranyl pyrophosphate (GGPP) for the prenylation of triacetic acid lactone (TAL). The biosynthesis of sartorypyrones begins with the production of triacetic acid lactone (TAL) by the NR-PKS spyA using one molecule of acetyl-CoA and two molecules of malonyl-CoA. The prenyltransferase spyF then conjugates geranylgeranyl pyrophosphate (GGPP) to TAL to form geranylgeranyl-triacetate lactone, for which the pathway-specific geranylgeranyl pyrophosphate synthase (GGPS) spyE is required to provide GGPP. Subsequently, geranylgeranyl-triacetate lactone is epoxidized at the terminal olein by the FAD-dependent monooxygenase spyC, followed by cyclization of the terpenoid component catalyzed by the terpene cyclase spyD to produce both the bicyclic sartorypyrone F and the monocyclic sartorypyrone D. Finally, the last step of the biosynthesis involves the acetylation of the meroterpenoids sartorypyrones D and F by the acetyltransferase SpyB to produce sartorypyrones A and G, respectively. The chain is Geranylgeranyl pyrophosphate synthase spyE from Aspergillus fumigatus (strain ATCC MYA-4609 / CBS 101355 / FGSC A1100 / Af293) (Neosartorya fumigata).